A 62-amino-acid polypeptide reads, in one-letter code: Photosystem II reaction center protein Z (62 aa).

A run of 2 helical transmembrane segments spans residues 8 to 28 (ALIG…VAYA) and 41 to 61 (WVGS…NFFV).

The protein belongs to the PsbZ family. As to quaternary structure, PSII is composed of 1 copy each of membrane proteins PsbA, PsbB, PsbC, PsbD, PsbE, PsbF, PsbH, PsbI, PsbJ, PsbK, PsbL, PsbM, PsbT, PsbX, PsbY, PsbZ, Psb30/Ycf12, peripheral proteins PsbO, CyanoQ (PsbQ), PsbU, PsbV and a large number of cofactors. It forms dimeric complexes.

It is found in the cellular thylakoid membrane. May control the interaction of photosystem II (PSII) cores with the light-harvesting antenna, regulates electron flow through the 2 photosystem reaction centers. PSII is a light-driven water plastoquinone oxidoreductase, using light energy to abstract electrons from H(2)O, generating a proton gradient subsequently used for ATP formation. The polypeptide is Photosystem II reaction center protein Z (Nostoc punctiforme (strain ATCC 29133 / PCC 73102)).